Reading from the N-terminus, the 302-residue chain is Calpain-1 catalytic subunit (302 aa).

Residues 1–114 (RESGCSFVLA…KRAGTQELDD (114 aa)) form a domain III region. The tract at residues 115–130 (QIQANLPDEQVLSAEE) is linker. A domain IV region spans residues 131 to 301 (IDENFKALFR…LFKWLQLTMF (171 aa)). EF-hand domains follow at residues 173-206 (FSME…NRIR), 203-238 (NRIR…AGFK), and 268-302 (VRLE…TMFA). Residues aspartate 186, aspartate 188, asparagine 190, lysine 192, glutamate 197, aspartate 216, aspartate 218, serine 220, serine 222, and glutamate 227 each contribute to the Ca(2+) site.

This sequence belongs to the peptidase C2 family. Forms a heterodimer with a small (regulatory) subunit CAPNS1. Ca(2+) serves as cofactor. Post-translationally, the N-terminus is blocked. Undergoes calcium-induced successive autoproteolytic cleavages that generate a membrane-bound 78 kDa active form and an intracellular 75 kDa active form. Calpastatin reduces with high efficiency the transition from 78 kDa to 75 kDa calpain forms. Ubiquitous.

Its subcellular location is the cytoplasm. It is found in the cell membrane. It carries out the reaction Broad endopeptidase specificity.. Its activity is regulated as follows. Activated by micromolar concentrations of calcium and inhibited by calpastatin. Its function is as follows. Calcium-regulated non-lysosomal thiol-protease which catalyzes limited proteolysis of substrates involved in cytoskeletal remodeling and signal transduction. Proteolytically cleaves CTBP1. Cleaves and activates caspase-7 (CASP7). The chain is Calpain-1 catalytic subunit from Oryctolagus cuniculus (Rabbit).